Consider the following 95-residue polypeptide: MRCVTSFVVLCILMFLVVNNVKVDVKAQRRKPVCKLTGVLNPGKCPTAIHDASNLCSRKLASPNMTFKRCDCQNTEWRGKDHYQCTCYIKLPCNQ.

An N-terminal signal peptide occupies residues 1–27; sequence MRCVTSFVVLCILMFLVVNNVKVDVKA. 4 cysteine pairs are disulfide-bonded: Cys-34-Cys-93, Cys-45-Cys-72, Cys-56-Cys-85, and Cys-70-Cys-87.

The protein belongs to the DEFL family.

The protein resides in the secreted. The sequence is that of Putative defensin-like protein 252 (SCRL13) from Arabidopsis thaliana (Mouse-ear cress).